The chain runs to 300 residues: Telomere repeat-binding factor 1 (300 aa).

The HTH myb-type domain maps to 1-58 (MGAPKQKWTQEEESALKSGVIKHGPGKWRTILKDPEFSGVLYLRSNVDLKDKWRNMSV). Positions 28–57 (WRTILKDPEFSGVLYLRSNVDLKDKWRNMS) form a DNA-binding region, H-T-H motif. 2 disordered regions span residues 93–119 (LQSD…RPNV) and 185–213 (NSTP…PSPK). Positions 117–185 (PNVRLDSLIM…KVKRKYRIPN (69 aa)) constitute an H15 domain. Residues 241–290 (EAAAVAAQAVAEAEAAMAEAEEAAKEAEAAEAEAEAAQAFAEEASKTLKG) are a coiled coil.

This sequence belongs to the histone H1/H5 family. SMH subfamily. Forms a homodimer and heterodimers with TRB2 or TRB3. Interacts with POT1b, TRB2 and TRB3 through its H15 domain.

The protein localises to the nucleus. It is found in the nucleolus. The protein resides in the chromosome. Functionally, binds preferentially double-stranded telomeric repeats. The chain is Telomere repeat-binding factor 1 (TRB1) from Arabidopsis thaliana (Mouse-ear cress).